The primary structure comprises 592 residues: V-type ATP synthase alpha chain (592 aa).

233 to 240 (GPFGSGKT) serves as a coordination point for ATP.

This sequence belongs to the ATPase alpha/beta chains family.

The catalysed reaction is ATP + H2O + 4 H(+)(in) = ADP + phosphate + 5 H(+)(out). In terms of biological role, produces ATP from ADP in the presence of a proton gradient across the membrane. The V-type alpha chain is a catalytic subunit. This is V-type ATP synthase alpha chain from Clostridium botulinum (strain Okra / Type B1).